The chain runs to 165 residues: Glucosamine 6-phosphate N-acetyltransferase (165 aa).

The region spanning 22-165 (FKVRPLAKDD…DDCNFMTQRF (144 aa)) is the N-acetyltransferase domain. Substrate is bound by residues threonine 44, 92-95 (KFIH), and 104-106 (EDV). 114–119 (RQKLGA) serves as a coordination point for acetyl-CoA. Substrate is bound by residues 135-136 (YK) and arginine 164.

This sequence belongs to the acetyltransferase family. GNA1 subfamily.

The enzyme catalyses D-glucosamine 6-phosphate + acetyl-CoA = N-acetyl-D-glucosamine 6-phosphate + CoA + H(+). It functions in the pathway nucleotide-sugar biosynthesis; UDP-N-acetyl-alpha-D-glucosamine biosynthesis; N-acetyl-alpha-D-glucosamine 1-phosphate from alpha-D-glucosamine 6-phosphate (route I): step 1/2. The protein is Glucosamine 6-phosphate N-acetyltransferase (gna-1) of Caenorhabditis elegans.